Reading from the N-terminus, the 212-residue chain is Entry-fusion complex associated protein OPG083 (212 aa).

The Virion surface portion of the chain corresponds to Met1 to Asp175. Intrachain disulfides connect Cys33–Cys55, Cys47–Cys127, and Cys107–Cys149. A helical transmembrane segment spans residues Pro176–Ile196. The Intravirion portion of the chain corresponds to Arg197–Val212.

The protein belongs to the orthopoxvirus OPG053 family. Component of the entry fusion complex (EFC) composed of OPG053/F9, OPG076/O3, OPG086/G3, OPG094/G9, OPG095/L1, OPG099/L5, OPG107/H2, OPG143/A16, OPG104/J5, OPG147/A21 and OPG155/A28. Except for OPG095/L1 and OPG052/F9, each of the EFC proteins is required for assembly or stability of the complex. Post-translationally, disulfid bonds are oxidized in the cytoplasm by OPG088 protein. In terms of processing, unglycosylated because produced in viral factories instead of the classic ER -Golgi route.

The protein localises to the virion membrane. Its function is as follows. Component of the entry fusion complex (EFC), which consists of 11 proteins. During cell infection, this complex mediates entry of the virion core into the host cytoplasm by a two-step mechanism consisting of lipid mixing of the viral and cellular membranes and subsequent pore formation. The sequence is that of Entry-fusion complex associated protein OPG083 (OPG053) from Vaccinia virus (strain Western Reserve) (VACV).